Reading from the N-terminus, the 184-residue chain is Mediator of RNA polymerase II transcription subunit 28 (184 aa).

The stretch at 77–105 (LLKEENFDLKQEIARKDELIRKHYEKIES) forms a coiled coil.

This sequence belongs to the Mediator complex subunit 28 family. In terms of assembly, component of the Mediator complex.

The protein resides in the nucleus. Functionally, component of the Mediator complex, a coactivator involved in the regulated transcription of nearly all RNA polymerase II-dependent genes. Mediator functions as a bridge to convey information from gene-specific regulatory proteins to the basal RNA polymerase II transcription machinery. Mediator is recruited to promoters by direct interactions with regulatory proteins and serves as a scaffold for the assembly of a functional preinitiation complex with RNA polymerase II and the general transcription factors. This is Mediator of RNA polymerase II transcription subunit 28 (MED28) from Aedes aegypti (Yellowfever mosquito).